Here is an 83-residue protein sequence, read N- to C-terminus: Large ribosomal subunit protein eL43 (83 aa).

Zn(2+) contacts are provided by cysteine 38, cysteine 41, cysteine 56, and cysteine 59. The segment at 38 to 59 (CPVCGRRAVRRISTGIWQCKKC) adopts a C4-type zinc-finger fold.

Belongs to the eukaryotic ribosomal protein eL43 family. Putative zinc-binding subfamily. In terms of assembly, part of the 50S ribosomal subunit. Zn(2+) serves as cofactor.

In terms of biological role, binds to the 23S rRNA. The protein is Large ribosomal subunit protein eL43 of Pyrococcus abyssi (strain GE5 / Orsay).